The primary structure comprises 668 residues: tRNA 5-methylaminomethyl-2-thiouridine biosynthesis bifunctional protein MnmC (668 aa).

The tract at residues 1–245 (MKHYSIQPAN…KREMLCGVME (245 aa)) is tRNA (mnm(5)s(2)U34)-methyltransferase. The FAD-dependent cmnm(5)s(2)U34 oxidoreductase stretch occupies residues 270–668 (IGGGIACALL…LLKGKAVKAG (399 aa)).

In the N-terminal section; belongs to the methyltransferase superfamily. tRNA (mnm(5)s(2)U34)-methyltransferase family. This sequence in the C-terminal section; belongs to the DAO family. FAD serves as cofactor.

The protein localises to the cytoplasm. It carries out the reaction 5-aminomethyl-2-thiouridine(34) in tRNA + S-adenosyl-L-methionine = 5-methylaminomethyl-2-thiouridine(34) in tRNA + S-adenosyl-L-homocysteine + H(+). Its function is as follows. Catalyzes the last two steps in the biosynthesis of 5-methylaminomethyl-2-thiouridine (mnm(5)s(2)U) at the wobble position (U34) in tRNA. Catalyzes the FAD-dependent demodification of cmnm(5)s(2)U34 to nm(5)s(2)U34, followed by the transfer of a methyl group from S-adenosyl-L-methionine to nm(5)s(2)U34, to form mnm(5)s(2)U34. In Shigella boydii serotype 18 (strain CDC 3083-94 / BS512), this protein is tRNA 5-methylaminomethyl-2-thiouridine biosynthesis bifunctional protein MnmC.